A 349-amino-acid chain; its full sequence is N-acetyltaurine hydrolase (349 aa).

A divalent metal cation contacts are provided by His-26, His-28, Glu-169, His-201, His-230, and Asp-298.

This sequence belongs to the metallo-dependent hydrolases superfamily. Phosphotriesterase family. It depends on a divalent metal cation as a cofactor.

It is found in the cytoplasm. The protein localises to the cytosol. It catalyses the reaction N-acetyltaurine + H2O = taurine + acetate. It carries out the reaction N-propanoyltaurine + H2O = propanoate + taurine. The enzyme catalyses N-acetyl-L-methionine + H2O = L-methionine + acetate. The catalysed reaction is N-acetyl-L-isoleucine + H2O = L-isoleucine + acetate. It catalyses the reaction N-acetyl-L-leucine + H2O = L-leucine + acetate. It carries out the reaction N-acetyl-L-valine + H2O = L-valine + acetate. Its function is as follows. N-acetyltaurine hydrolase that regulates feeding by catalyzing the hydrolysis of N-acetyltaurine into taurine and acetate. N-acetyltaurine has anorexigenic and anti-obesity effects that are dependent on GFRAL receptor and GDF15. PTER also acts on other N-acetyl amino acids (Met, Ile, Leu, Val) and N-propionyltaurine, but at lower rates. The polypeptide is N-acetyltaurine hydrolase (PTER) (Bos taurus (Bovine)).